The sequence spans 228 residues: PKHD-type hydroxylase Reut_A2877 (228 aa).

One can recognise a Fe2OG dioxygenase domain in the interval 80–180 (IVYPPMFNRY…RVASFFWIQS (101 aa)). Fe cation is bound by residues histidine 98, aspartate 100, and histidine 161. 2-oxoglutarate is bound at residue arginine 171.

Fe(2+) is required as a cofactor. Requires L-ascorbate as cofactor.

This Cupriavidus pinatubonensis (strain JMP 134 / LMG 1197) (Cupriavidus necator (strain JMP 134)) protein is PKHD-type hydroxylase Reut_A2877.